A 30-amino-acid polypeptide reads, in one-letter code: Cycloviolacin-O1 (30 aa).

The segment at residues 1–30 is a cross-link (cyclopeptide (Gly-Asn)); that stretch reads GIPCAESCVYIPCTVTALLGCSCSNRVCYN. Cystine bridges form between C4-C21, C8-C23, and C13-C28.

Post-translationally, this is a cyclic peptide. In terms of tissue distribution, expressed in leaves, petals, petioles and roots but not in runners (at protein level).

Probably participates in a plant defense mechanism. The sequence is that of Cycloviolacin-O1 from Viola odorata (Sweet violet).